The chain runs to 306 residues: Secreted RxLR effector protein 76 (306 aa).

An N-terminal signal peptide occupies residues 1-21 (MSGAFYVFTALLLVASDQIAA). Residues 48–65 (RFLRGSRDEPDNLANEER) carry the RxLR-dEER motif. Positions 105 to 142 (AAKAVKKRPRGAKAGRKMPRAAEAEAVKKVPRAGTAVK) are disordered. A compositionally biased stretch (basic residues) spans 107-123 (KAVKKRPRGAKAGRKMP).

Belongs to the RxLR effector family.

The protein resides in the secreted. Its subcellular location is the host nucleus. Secreted effector that partially suppresses the host cell death induced by cell death-inducing proteins. This is Secreted RxLR effector protein 76 from Plasmopara viticola (Downy mildew of grapevine).